The chain runs to 36 residues: F420-dependent NADP reductase (36 aa).

9 to 12 (TGNI) lines the NADP(+) pocket.

This sequence belongs to the F420-dependent NADP reductase family. As to quaternary structure, homotetramer.

The catalysed reaction is reduced coenzyme F420-(gamma-L-Glu)(n) + NADP(+) = oxidized coenzyme F420-(gamma-L-Glu)(n) + NADPH + 2 H(+). In terms of biological role, catalyzes the reduction of NADP(+) with F420H(2) via hydride transfer, and the reverse reaction, i.e. the reduction of F420 with NADPH. In M.organophilum, an alcohol-fermenting methanogen containing an NADP-dependent alcohol dehydrogenase, is probably involved in the regeneration of F420H(2) required for CO(2) reduction to methane. Thus, during growth on alcohol and CO(2), the F420-dependent NADP reductase probably has the function of coupling the NADP-dependent oxidation of the alcohol to the aldehyde with the F420-dependent reduction of CO(2) to methane. The chain is F420-dependent NADP reductase (fno) from Methanogenium organophilum.